Reading from the N-terminus, the 168-residue chain is DAZ-associated protein 2 (168 aa).

Low complexity predominate over residues 1-13 (MNSKGQYPTQPTY). A disordered region spans residues 1-25 (MNSKGQYPTQPTYPVQPPGNPVYPQ). The PPAY motif lies at 39–42 (PPAY). Ser-77 is modified (phosphoserine).

As to quaternary structure, interacts with SOX6. Interacts with DAZ1 and DAZL. Interacts with IL17RB. May interact with FAM168B. Interacts with INCA1. Interacts with EIF4G1 and EIF4G2. Interacts (via PPAY motif) with NEDD4 (via WW domains). Interacts with transcription factor TCF4; the interaction results in localization of DAZAP2 to the nucleus. Interacts with transcription factors TCF7 and TCF7L1. Interacts with transcription factor LEF1. Interacts with serine/threonine-protein kinase HIPK2; the interaction results in phosphorylation of DAZAP2 which causes localization of DAZAP2 to the nucleus, reduces interaction of DAZAP2 with HIPK2 and prevents DAZAP2-dependent degradation of HIPK2. Interacts with ubiquitin ligase SIAH1; the interaction is decreased following phosphorylation of DAZAP2 by HIPK2. Interacts with TP53; the interaction is triggered by DNA damage. Ubiquitinated by SMURF2, leading to proteasomal degradation. Ubiquitinated by NEDD4, leading to proteasomal degradation. In terms of processing, following DNA damage, phosphorylated by HIPK2 which promotes DAZAP2 localization to the nucleus, reduces interaction of DAZAP2 with HIPK2 and SIAH1, and prevents DAZAP2-dependent ubiquitination of HIPK2 by E3 ubiquitin-protein ligase SIAH1 and subsequent HIPK2 proteasomal degradation.

It is found in the cytoplasm. The protein resides in the nucleus. The protein localises to the nucleus speckle. It localises to the nuclear body. Its subcellular location is the stress granule. In unstressed cells, promotes SIAH1-mediated polyubiquitination and degradation of the serine/threonine-protein kinase HIPK2, probably by acting as a loading factor that potentiates complex formation between HIPK2 and ubiquitin ligase SIAH1. In response to DNA damage, localizes to the nucleus following phosphorylation by HIPK2 and modulates the expression of a subset of TP53/p53 target genes by binding to TP53 at target gene promoters. This limits the expression of a number of cell death-mediating TP53 target genes, reducing DNA damage-induced cell death. Enhances the binding of transcription factor TCF7L2/TCF4, a Wnt signaling pathway effector, to the promoters of target genes. Plays a role in stress granule formation. This chain is DAZ-associated protein 2, found in Rattus norvegicus (Rat).